Consider the following 323-residue polypeptide: Olfactory receptor 4K5 (323 aa).

Residues 1–25 (MDKSNSSVVSEFVLLGLCSSQKLQL) are Extracellular-facing. N-linked (GlcNAc...) asparagine glycosylation is present at N5. Residues 26 to 49 (FYFCFFSVLYTVIVLGNLLIILTV) traverse the membrane as a helical segment. The Cytoplasmic portion of the chain corresponds to 50-57 (TSDTSLHS). The helical transmembrane segment at 58-79 (PMYFLLGNLSFVDICQASFATP) threads the bilayer. Residues 80–100 (KMIADFLSAHETISFSGCIAQ) are Extracellular-facing. C97 and C189 are joined by a disulfide. The chain crosses the membrane as a helical span at residues 101–120 (IFFIHLFTGGEMVLLVSMAY). At 121 to 139 (DRYVAICKPLYYVVIMSRR) the chain is on the cytoplasmic side. Residues 140 to 158 (TCTVLVMISWAVSLVHTLS) traverse the membrane as a helical segment. The Extracellular segment spans residues 159 to 195 (QLSFTVNLPFCGPNVVDSFFCDLPRVTKLACLDSYII). Residues 196–219 (EILIVVNSGILSLSTFSLLVSSYI) traverse the membrane as a helical segment. Residues 220–235 (IILVTVWLKSSAAMAK) lie on the Cytoplasmic side of the membrane. A helical membrane pass occupies residues 236–258 (AFSTLASHIAVVILFFGPCIFIY). Over 259 to 269 (VWPFTISPLDK) the chain is Extracellular. The helical transmembrane segment at 270–289 (FLAIFYTVFTPVLNPIIYTL) threads the bilayer. At 290 to 323 (RNRDMKAAVRKIVNHYLRPRRISEMSLVVRTSFH) the chain is on the cytoplasmic side.

The protein belongs to the G-protein coupled receptor 1 family.

It localises to the cell membrane. Odorant receptor. In Homo sapiens (Human), this protein is Olfactory receptor 4K5 (OR4K5).